The following is a 581-amino-acid chain: MSKQTYKVCFCFRRRFRYTASEAPREIKTIFEKYSENGVMTVDHLHRFLIDVQKQDKATREDAQSIINSASSLLHRNGLHLDAFFKYLFGDNNPPLALHKVHHDMDAPISHYFIFTGHNSYLTGNQLSSDCSEVPIIDALKKGVRVIELDIWPNSNKDDIDVLHGMTLTTPVGLIKCLKAIRAHAFDVSDYPVVVTLEDHLTPDLQSKVAEMVTEIFGEILFTPPVGESLKEFPSPNSLKRRIIISTKPPKEYKEGKDVEVVQKGKDLGDEEVWGREVPSFIQRNKSEAKDDLDGNDDDDDDDDEDKSKINAPPQYKHLIAIHAGKPKGGITECLKVDPDKVRRLSLSEEQLEKAAEKYAKQIVRFTQHNLLRIYPKGTRVTSSNYNPLVGWSHGAQMVAFNMQGYGRSLWLMQGMFRANGGCGYIKKPDLLLKSGSDSDIFDPKATLPVKTTLRVTVYMGEGWYFDFRHTHFDQYSPPDFYTRVGIAGVPGDTVMKKTKTLEDNWIPAWDEVFEFPLTVPELALLRLEVHEYDMSEKDDFGGQTCLPVWELSEGIRAFPLHSRKGEKYKSVKLLVKVEFV.

The 77-residue stretch at 26–102 folds into the EF-hand-like domain; that stretch reads EIKTIFEKYS…NPPLALHKVH (77 aa). Residues 103-248 form the PI-PLC X-box domain; it reads HDMDAPISHY…LKRRIIISTK (146 aa). Active-site residues include histidine 118 and histidine 164. Positions 279–314 are disordered; the sequence is PSFIQRNKSEAKDDLDGNDDDDDDDDEDKSKINAPP. A compositionally biased stretch (acidic residues) spans 294–305; the sequence is DGNDDDDDDDDE. Positions 317–433 constitute a PI-PLC Y-box domain; sequence KHLIAIHAGK…GYIKKPDLLL (117 aa). Positions 434 to 563 constitute a C2 domain; that stretch reads KSGSDSDIFD…EGIRAFPLHS (130 aa).

Ca(2+) serves as cofactor. In terms of processing, phosphorylation level varies significantly during early response to bacterial elicitor. Expressed in roots, shoots, leaves and flowers.

The protein localises to the cell membrane. It carries out the reaction a 1,2-diacyl-sn-glycero-3-phospho-(1D-myo-inositol-4,5-bisphosphate) + H2O = 1D-myo-inositol 1,4,5-trisphosphate + a 1,2-diacyl-sn-glycerol + H(+). In terms of biological role, the production of the second messenger molecules diacylglycerol (DAG) and inositol 1,4,5-trisphosphate (IP3) is mediated by activated phosphatidylinositol-specific phospholipase C enzymes. At physiological calcium concentration, the preferred substrate is phosphatidylinositol 4,5-bisphosphate versus phosphatidylinositol. The sequence is that of Phosphoinositide phospholipase C 2 (PLC2) from Arabidopsis thaliana (Mouse-ear cress).